The chain runs to 137 residues: Glutamate mutase sigma subunit (137 aa).

A B12-binding domain is found at 3–137 (KKTIVLGVIG…ADLKKDLNIE (135 aa)). Adenosylcob(III)alamin-binding positions include 13–17 (SDCHA), His-16, 61–63 (SSL), and 93–97 (NIVVG).

This sequence belongs to the methylaspartate mutase GlmS subunit family. Heterotetramer composed of 2 epsilon subunits (GlmE) and 2 sigma subunits (GlmS). GlmE exists as a homodimer and GlmS as a monomer. The cofactor is adenosylcob(III)alamin.

The catalysed reaction is (2S,3S)-3-methyl-L-aspartate = L-glutamate. It functions in the pathway amino-acid degradation; L-glutamate degradation via mesaconate pathway; acetate and pyruvate from L-glutamate: step 1/4. With respect to regulation, competitively inhibited by (2S,4S)-4-fluoroglutamate, 2-methyleneglutarate, (2R,3RS)-3-fluoroglutamate and (S)-3-methylitaconate. Functionally, catalyzes the carbon skeleton rearrangement of L-glutamate to L-threo-3-methylaspartate ((2S,3S)-3-methylaspartate). The polypeptide is Glutamate mutase sigma subunit (Clostridium cochlearium).